The following is a 71-amino-acid chain: Prophage lysis protein S homolog EssQ (71 aa).

This sequence belongs to the lambda phage S protein family.

The sequence is that of Prophage lysis protein S homolog EssQ (essQ) from Escherichia coli (strain K12).